Consider the following 467-residue polypeptide: Methylenetetrahydrofolate--tRNA-(uracil-5-)-methyltransferase TrmFO (467 aa).

10–15 (GAGLAG) is a binding site for FAD.

Belongs to the MnmG family. TrmFO subfamily. It depends on FAD as a cofactor.

It localises to the cytoplasm. It carries out the reaction uridine(54) in tRNA + (6R)-5,10-methylene-5,6,7,8-tetrahydrofolate + NADH + H(+) = 5-methyluridine(54) in tRNA + (6S)-5,6,7,8-tetrahydrofolate + NAD(+). The enzyme catalyses uridine(54) in tRNA + (6R)-5,10-methylene-5,6,7,8-tetrahydrofolate + NADPH + H(+) = 5-methyluridine(54) in tRNA + (6S)-5,6,7,8-tetrahydrofolate + NADP(+). In terms of biological role, catalyzes the folate-dependent formation of 5-methyl-uridine at position 54 (M-5-U54) in all tRNAs. The polypeptide is Methylenetetrahydrofolate--tRNA-(uracil-5-)-methyltransferase TrmFO (Prochlorococcus marinus (strain MIT 9515)).